The following is a 135-amino-acid chain: Hemoglobin subunit alpha (135 aa).

The 135-residue stretch at 1–135 (AAVVALWGKI…VALALAERYK (135 aa)) folds into the Globin domain. Histidine 52 is an O2 binding site. Residue histidine 81 coordinates heme b.

It belongs to the globin family. Hb1 is a heterotetramer of two alpha chains and two beta-1 chains. Hb2 is a heterotetramer of two alpha chains and two beta-2 chains. The N-terminus is blocked. In terms of tissue distribution, red blood cells.

Its function is as follows. Involved in oxygen transport from gills to the various peripheral tissues. This chain is Hemoglobin subunit alpha, found in Dissostichus eleginoides (Patagonian toothfish).